A 248-amino-acid polypeptide reads, in one-letter code: 2,3-bisphosphoglycerate-dependent phosphoglycerate mutase (248 aa).

Substrate contacts are provided by residues arginine 8 to asparagine 15, threonine 21 to glycine 22, arginine 60, glutamate 87 to tyrosine 90, lysine 98, arginine 114 to arginine 115, and glycine 183 to asparagine 184. Histidine 9 functions as the Tele-phosphohistidine intermediate in the catalytic mechanism. Glutamate 87 functions as the Proton donor/acceptor in the catalytic mechanism.

Belongs to the phosphoglycerate mutase family. BPG-dependent PGAM subfamily. Homodimer.

The catalysed reaction is (2R)-2-phosphoglycerate = (2R)-3-phosphoglycerate. It participates in carbohydrate degradation; glycolysis; pyruvate from D-glyceraldehyde 3-phosphate: step 3/5. Catalyzes the interconversion of 2-phosphoglycerate and 3-phosphoglycerate. The polypeptide is 2,3-bisphosphoglycerate-dependent phosphoglycerate mutase (Burkholderia vietnamiensis (strain G4 / LMG 22486) (Burkholderia cepacia (strain R1808))).